Here is a 217-residue protein sequence, read N- to C-terminus: NADPH-dependent 3-demethoxyubiquinone 3-hydroxylase, mitochondrial (217 aa).

2 consecutive repeat copies span residues 49–130 (IIER…SALM) and 131–217 (GKEA…STRV). Residues 49-217 (IIERIIRVDH…KTAIWLSTRV (169 aa)) form a 2 X approximate tandem repeats region. Residue arginine 52 participates in NADH binding. Fe cation-binding residues include glutamate 61, glutamate 91, histidine 94, glutamate 143, glutamate 178, and histidine 181. Arginine 216 lines the NADH pocket.

This sequence belongs to the COQ7 family. In terms of assembly, component of a multi-subunit COQ enzyme complex. Fe cation serves as cofactor.

Its subcellular location is the mitochondrion inner membrane. It carries out the reaction a 5-methoxy-2-methyl-3-(all-trans-polyprenyl)benzoquinone + NADH + O2 = a 3-demethylubiquinone + NAD(+) + H2O. The protein operates within cofactor biosynthesis; ubiquinone biosynthesis. Catalyzes the hydroxylation of the 5-methoxy-2-methyl-3-(all-trans-polyprenyl)benzoquinone at the C6 position and participates in the biosynthesis of ubiquinone. Catalyzes the reaction through a substrate-mediated reduction pathway, whereby NADH shuttles electrons to 5-methoxy-2-methyl-3-(all-trans-decaprenyl)benzoquinone, which then transfers the electrons to the two Fe(3+) centers. The binding of 5-methoxy-2-methyl-3-(all-trans-polyprenyl)benzoquinone (DMQn) mediates reduction of the diiron center by nicotinamide adenine dinucleotide (NADH) and initiates oxygen activation for subsequent DMQ hydroxylation. Also has a structural role in the COQ enzyme complex, stabilizing other COQ polypeptides. This chain is NADPH-dependent 3-demethoxyubiquinone 3-hydroxylase, mitochondrial, found in Dictyostelium discoideum (Social amoeba).